The sequence spans 432 residues: D-amino acid dehydrogenase (432 aa).

FAD is bound at residue 3 to 17; it reads VVILGSGVVGVASAW.

It belongs to the DadA oxidoreductase family. The cofactor is FAD.

It carries out the reaction a D-alpha-amino acid + A + H2O = a 2-oxocarboxylate + AH2 + NH4(+). Its pathway is amino-acid degradation; D-alanine degradation; NH(3) and pyruvate from D-alanine: step 1/1. Its function is as follows. Oxidative deamination of D-amino acids. This Shigella sonnei (strain Ss046) protein is D-amino acid dehydrogenase.